The sequence spans 241 residues: Beta-nerve growth factor (241 aa).

The signal sequence occupies residues 1–18 (MSMLFYTLITAFLIGVQA). The propeptide occupies 19–121 (EPYTDSNVPE…PFNRTHRSKR (103 aa)). 2 N-linked (GlcNAc...) asparagine glycosylation sites follow: Asn69 and Asn114. 3 disulfides stabilise this stretch: Cys136–Cys201, Cys179–Cys229, and Cys189–Cys231. A 1-acyl-sn-glycero-3-phospho-(1D-myo-inositol)-binding residues include Arg171, Tyr173, and Lys209. Position 171 (Arg171) interacts with a 1-acyl-sn-glycero-3-phospho-L-serine. Lys209 is an a 1-acyl-sn-glycero-3-phospho-L-serine binding site.

It belongs to the NGF-beta family. Homodimer. The homodimer interacts with a single NTRK1 chain. The homodimer interacts with a single NGFR chain. The NGF dimer interacts with a single SORCS2 chain (via extracellular domain). The NGF precursor (proNGF) binds to a receptor complex formed by SORT1 and NGFR, which leads to NGF endocytosis. Both mature NGF and the immature NGF precursor (proNGF) interact with SORCS2 and with the heterodimer formed by SORCS2 and NGFR (via extracellular domains). The NGF precursor (proNGF) has much higher affinity for SORCS2 than mature NGF. The NGF precursor (proNGF) has much higher affinity for SORT1 than mature NGF. Interacts with ADAM10 in a divalent cation-dependent manner. Interacts with SORCS3. As to expression, detected in submaxillary gland (at protein level). Highly expressed in male submaxillary gland. Levels are much lower in female submaxillary gland.

Its subcellular location is the secreted. It localises to the endosome lumen. In terms of biological role, nerve growth factor is important for the development and maintenance of the sympathetic and sensory nervous systems. Extracellular ligand for the NTRK1 and NGFR receptors, activates cellular signaling cascades to regulate neuronal proliferation, differentiation and survival. The immature NGF precursor (proNGF) functions as a ligand for the heterodimeric receptor formed by SORCS2 and NGFR, and activates cellular signaling cascades that lead to inactivation of RAC1 and/or RAC2, reorganization of the actin cytoskeleton and neuronal growth cone collapse. In contrast to mature NGF, the precursor form (proNGF) promotes neuronal apoptosis (in vitro). Inhibits metalloproteinase-dependent proteolysis of platelet glycoprotein VI. Binds lysophosphatidylinositol and lysophosphatidylserine between the two chains of the homodimer. The lipid-bound form promotes histamine relase from mast cells, contrary to the lipid-free form. In Mus musculus (Mouse), this protein is Beta-nerve growth factor (Ngf).